The sequence spans 122 residues: Large ribosomal subunit protein uL14 (122 aa).

The protein belongs to the universal ribosomal protein uL14 family. In terms of assembly, part of the 50S ribosomal subunit. Forms a cluster with proteins L3 and L19. In the 70S ribosome, L14 and L19 interact and together make contacts with the 16S rRNA in bridges B5 and B8.

Binds to 23S rRNA. Forms part of two intersubunit bridges in the 70S ribosome. This Bordetella parapertussis (strain 12822 / ATCC BAA-587 / NCTC 13253) protein is Large ribosomal subunit protein uL14.